Here is a 566-residue protein sequence, read N- to C-terminus: Arginine--tRNA ligase (566 aa).

The 'HIGH' region signature appears at 123-133 (PNIAKPFHIGH).

It belongs to the class-I aminoacyl-tRNA synthetase family. As to quaternary structure, monomer.

The protein resides in the cytoplasm. It catalyses the reaction tRNA(Arg) + L-arginine + ATP = L-arginyl-tRNA(Arg) + AMP + diphosphate. In Clostridioides difficile (strain 630) (Peptoclostridium difficile), this protein is Arginine--tRNA ligase.